Here is a 440-residue protein sequence, read N- to C-terminus: Proline--tRNA ligase (440 aa).

Belongs to the class-II aminoacyl-tRNA synthetase family. ProS type 2 subfamily. In terms of assembly, homodimer.

The protein localises to the cytoplasm. The catalysed reaction is tRNA(Pro) + L-proline + ATP = L-prolyl-tRNA(Pro) + AMP + diphosphate. Its function is as follows. Catalyzes the attachment of proline to tRNA(Pro) in a two-step reaction: proline is first activated by ATP to form Pro-AMP and then transferred to the acceptor end of tRNA(Pro). This Azorhizobium caulinodans (strain ATCC 43989 / DSM 5975 / JCM 20966 / LMG 6465 / NBRC 14845 / NCIMB 13405 / ORS 571) protein is Proline--tRNA ligase.